The chain runs to 259 residues: Small ribosomal subunit protein mS23 (259 aa).

Positions 230–244 are enriched in polar residues; it reads RAASFTGSALPSSEE. The interval 230 to 259 is disordered; that stretch reads RAASFTGSALPSSEESAPVDEETEKVPQQV.

This sequence belongs to the mitochondrion-specific ribosomal protein mS23 family. As to quaternary structure, component of the mitochondrial small ribosomal subunit.

Its subcellular location is the mitochondrion. This Aspergillus terreus (strain NIH 2624 / FGSC A1156) protein is Small ribosomal subunit protein mS23 (rsm25).